A 487-amino-acid polypeptide reads, in one-letter code: Ribosome biogenesis protein YTM1 (487 aa).

Residues 13–95 (VKVTFTTNEA…ETNLTLQYVR (83 aa)) are ubiquitin-like (UBL) domain. WD repeat units follow at residues 122-161 (SPAGRWSGENFSRGQERILSASYDGLLRIWNASGEVLVTA), 168-206 (GHSASIKAAKFISSTQIASTGMDRSVRVWKYTDPGASGQ), 217-256 (GHRASVDSLEVHGPSKRILTASADGSVALWSASKSSSPEA), 379-419 (GHTN…PASG), and 451-487 (GEGAKVFGVVWDRELGILSGGEDKKVQVNRGRDVVRE). The interval 253–277 (SPEADASLLPNAHTSKRRKVASSVT) is disordered.

The protein belongs to the WD repeat WDR12/YTM1 family. As to quaternary structure, component of the NOP7 complex, composed of ERB1, NOP7 and YTM1. The complex is held together by ERB1, which interacts with NOP7 via its N-terminal domain and with YTM1 via a high-affinity interaction between the seven-bladed beta-propeller domains of the 2 proteins. The NOP7 complex associates with the 66S pre-ribosome. Interacts (via UBL domain) with MDN1 (via VWFA/MIDAS domain).

It localises to the nucleus. It is found in the nucleolus. Its subcellular location is the nucleoplasm. In terms of biological role, component of the NOP7 complex, which is required for maturation of the 25S and 5.8S ribosomal RNAs and formation of the 60S ribosome. The polypeptide is Ribosome biogenesis protein YTM1 (Podospora anserina (strain S / ATCC MYA-4624 / DSM 980 / FGSC 10383) (Pleurage anserina)).